A 241-amino-acid polypeptide reads, in one-letter code: MQPQYQMGYDRAITVFSPDGRLYQVEYAREAVKRGTTAVGIKCNDGIVLLVDKRVNSKLLEPSSIEKIFKIDNHIGVASSGLVGDARSLVDRARVESQVNRVSYDEQIDVEMLSKKLCDHMQTYTQFGGARPYGTALLIAGISDGQFRLFETDPSGTLLEYKATGIGIGRNAVMKVFEEEYNPEASIRDAILLGLKALHAATEGKFDVNTVEIGVVNNDTPAFRKMSRQEVASFVEQIEQS.

This sequence belongs to the peptidase T1A family. The 20S proteasome core is composed of 14 alpha and 14 beta subunits that assemble into four stacked heptameric rings, resulting in a barrel-shaped structure. The two inner rings, each composed of seven catalytic beta subunits, are sandwiched by two outer rings, each composed of seven alpha subunits. The catalytic chamber with the active sites is on the inside of the barrel. Has a gated structure, the ends of the cylinder being occluded by the N-termini of the alpha-subunits. Is capped at one or both ends by the proteasome regulatory ATPase, PAN.

The protein resides in the cytoplasm. With respect to regulation, the formation of the proteasomal ATPase PAN-20S proteasome complex, via the docking of the C-termini of PAN into the intersubunit pockets in the alpha-rings, triggers opening of the gate for substrate entry. Interconversion between the open-gate and close-gate conformations leads to a dynamic regulation of the 20S proteasome proteolysis activity. In terms of biological role, component of the proteasome core, a large protease complex with broad specificity involved in protein degradation. The chain is Proteasome subunit alpha from Methanosphaerula palustris (strain ATCC BAA-1556 / DSM 19958 / E1-9c).